We begin with the raw amino-acid sequence, 268 residues long: Phosphatidylglycerol--prolipoprotein diacylglyceryl transferase (268 aa).

Transmembrane regions (helical) follow at residues 23-43, 62-82, 97-117, 132-152, 179-199, 206-226, and 241-261; these read IGLR…RWLA, LLFN…VFFY, VWEG…AMIW, FVAP…FINL, SQLY…NIFI, ASVA…VEYV, and GQAL…WAYS. Arg145 provides a ligand contact to a 1,2-diacyl-sn-glycero-3-phospho-(1'-sn-glycerol).

This sequence belongs to the Lgt family.

The protein localises to the cell inner membrane. It carries out the reaction L-cysteinyl-[prolipoprotein] + a 1,2-diacyl-sn-glycero-3-phospho-(1'-sn-glycerol) = an S-1,2-diacyl-sn-glyceryl-L-cysteinyl-[prolipoprotein] + sn-glycerol 1-phosphate + H(+). It functions in the pathway protein modification; lipoprotein biosynthesis (diacylglyceryl transfer). Functionally, catalyzes the transfer of the diacylglyceryl group from phosphatidylglycerol to the sulfhydryl group of the N-terminal cysteine of a prolipoprotein, the first step in the formation of mature lipoproteins. This Haemophilus influenzae (strain 86-028NP) protein is Phosphatidylglycerol--prolipoprotein diacylglyceryl transferase.